Consider the following 316-residue polypeptide: Olfactory receptor 56B2 (316 aa).

Residues 1 to 32 (MVLQELRDSNSSKFQVSEFILMGFPGIHSWQH) lie on the Extracellular side of the membrane. Residue Asn-10 is glycosylated (N-linked (GlcNAc...) asparagine). The helical transmembrane segment at 33–53 (WLSLPLALLYLLALSANILIL) threads the bilayer. The Cytoplasmic segment spans residues 54 to 61 (IIINKEAA). The helical transmembrane segment at 62–82 (LHQPMYYFLGILAMADIGLAT) threads the bilayer. Over 83–106 (TIMPKILAILWFNAKTISLLECFA) the chain is Extracellular. A disulfide bridge connects residues Cys-104 and Cys-196. Residues 107–127 (QMYAIHCFVAMESSTFVCMAI) traverse the membrane as a helical segment. The Cytoplasmic portion of the chain corresponds to 128-146 (DRYVAICRPLRYPSIITES). Residues 147–167 (FVFKANGFMALRNSLCLISVP) form a helical membrane-spanning segment. The Extracellular segment spans residues 168-203 (LLAAQRHYCSQNQIEHCLCSNLGVTSLSCDDRRINS). Residues 204–224 (INQVLLAWTLMGSDLGLIILS) traverse the membrane as a helical segment. Topologically, residues 225 to 244 (YALILYSVLKLNSPEAASKA) are cytoplasmic. Residues 245–265 (LSTCTSHLILILFFYTVIIVI) form a helical membrane-spanning segment. At 266 to 279 (SITRSTGMRVPLIP) the chain is on the extracellular side. Residues 280 to 300 (VLLNVLHNVIPPALNPMVYAL) form a helical membrane-spanning segment. At 301–316 (KNKELRQGLYKVLRLE) the chain is on the cytoplasmic side.

This sequence belongs to the G-protein coupled receptor 1 family.

It localises to the cell membrane. Odorant receptor. The sequence is that of Olfactory receptor 56B2 from Homo sapiens (Human).